A 258-amino-acid polypeptide reads, in one-letter code: Elongation factor Ts (258 aa).

Positions 81-84 (TDFV) are involved in Mg(2+) ion dislocation from EF-Tu. The interval 216–258 (GLKPAEAPKVEETPPAPPEEPAPEPAPAAESKPAKKGSAKKKK) is disordered. Residues 229-241 (PPAPPEEPAPEPA) show a composition bias toward pro residues. Positions 249–258 (AKKGSAKKKK) are enriched in basic residues.

Belongs to the EF-Ts family.

The protein resides in the cytoplasm. Its function is as follows. Associates with the EF-Tu.GDP complex and induces the exchange of GDP to GTP. It remains bound to the aminoacyl-tRNA.EF-Tu.GTP complex up to the GTP hydrolysis stage on the ribosome. The chain is Elongation factor Ts from Synechococcus sp. (strain JA-2-3B'a(2-13)) (Cyanobacteria bacterium Yellowstone B-Prime).